A 304-amino-acid chain; its full sequence is MRLPIFLDTDPGIDDAVAIAAAIFAPELDLQLMTTVAGNVSVEKTTRNALQLLHFWNVDIPLAQGAAVPLVRAPRDAASVHGESGMAGYDFVEHNRQPLGIPAFLAIRDALMRAPEPVTLVAIGPLTNIALLLSQCPECKPYIRRLVIMGGSAGRGNCTPNAEFNIAADPEAAACVFRSGIEIVMCGLDVTNQAILTPDYLATLPELNRTGKMLHALFSHYRSGSMQSGLRMHDLCAIAWLVRPELFTLKPCFVAVETQGEFTSGTTVVDIDGCLGKPANVQVALDLDVKGFQQWVAEVLALAL.

Histidine 233 is a catalytic residue.

It belongs to the IUNH family. RihC subfamily.

In terms of biological role, hydrolyzes both purine and pyrimidine ribonucleosides with a broad-substrate specificity. The sequence is that of Non-specific ribonucleoside hydrolase RihC from Escherichia coli O45:K1 (strain S88 / ExPEC).